A 228-amino-acid chain; its full sequence is Tol-Pal system protein TolQ (228 aa).

A run of 3 helical transmembrane segments spans residues 16-36 (IVVQ…WAII), 137-157 (VSPY…FMAL), and 172-192 (IAEA…AVMA).

Belongs to the ExbB/TolQ family. As to quaternary structure, the Tol-Pal system is composed of five core proteins: the inner membrane proteins TolA, TolQ and TolR, the periplasmic protein TolB and the outer membrane protein Pal. They form a network linking the inner and outer membranes and the peptidoglycan layer.

It localises to the cell inner membrane. Part of the Tol-Pal system, which plays a role in outer membrane invagination during cell division and is important for maintaining outer membrane integrity. In Haemophilus influenzae (strain ATCC 51907 / DSM 11121 / KW20 / Rd), this protein is Tol-Pal system protein TolQ.